The chain runs to 179 residues: Large ribosomal subunit protein uL5 (179 aa).

It belongs to the universal ribosomal protein uL5 family. In terms of assembly, part of the 50S ribosomal subunit; part of the 5S rRNA/L5/L18/L25 subcomplex. Contacts the 5S rRNA and the P site tRNA. Forms a bridge to the 30S subunit in the 70S ribosome.

Its function is as follows. This is one of the proteins that bind and probably mediate the attachment of the 5S RNA into the large ribosomal subunit, where it forms part of the central protuberance. In the 70S ribosome it contacts protein S13 of the 30S subunit (bridge B1b), connecting the 2 subunits; this bridge is implicated in subunit movement. Contacts the P site tRNA; the 5S rRNA and some of its associated proteins might help stabilize positioning of ribosome-bound tRNAs. This Oceanobacillus iheyensis (strain DSM 14371 / CIP 107618 / JCM 11309 / KCTC 3954 / HTE831) protein is Large ribosomal subunit protein uL5.